The primary structure comprises 541 residues: Beta-hexosaminidase 1 (541 aa).

An N-terminal signal peptide occupies residues 1 to 20 (MSTNLLRLILLFITLSITSS). Asparagine 44 and asparagine 304 each carry an N-linked (GlcNAc...) asparagine glycan. Cysteine 295 and cysteine 337 are oxidised to a cystine. Glutamate 332 (proton donor) is an active-site residue. Residues asparagine 340, asparagine 352, and asparagine 497 are each glycosylated (N-linked (GlcNAc...) asparagine). Cysteines 511 and 538 form a disulfide.

This sequence belongs to the glycosyl hydrolase 20 family. In terms of processing, N-glycosylated. As to expression, expressed in roots, leaves, stems, flowers and siliques.

The protein localises to the vacuole. It catalyses the reaction Hydrolysis of terminal non-reducing N-acetyl-D-hexosamine residues in N-acetyl-beta-D-hexosaminides.. Inhibited by N-acetylcastanospermine, 2-acet-amido-1,2-dideoxynojirimycin and PUGNAc. Its function is as follows. Has a broad substrate specificity. Can use synthetic substrates such as pyridylaminated chitotriose, pyridylaminated chitobiose, p-nitrophenyl-beta-N-acetylglucosaminide, p-nitrophenyl-2-acetamido-2-deoxy-beta-D-glucopyranoside (pNP-GlcNAc), p-nitrophenyl-2-acetamido-2-deoxy-beta-D-galactopyranoside (pNP-GalNAc), 4-methylumbelliferyl-2-acetamido-2-deoxy-beta-D-glucopyranoside (MU-GlcNAc), and 4-methylumbelliferyl-6-sulfo-2-acetamido-2-deoxy-beta-D-glucopyranoside (MU-GlcNAc-6SO(4)) as substrates. Removes terminal GlcNAc residues from alpha1,3- and alpha1,6-mannosyl branches of biantennary N-glycans without any strict branch preference. Required for the presence of paucimannosidic N-glycans in glycoproteins of roots and, to a lower extent, of leaves. The chain is Beta-hexosaminidase 1 (HEXO1) from Arabidopsis thaliana (Mouse-ear cress).